We begin with the raw amino-acid sequence, 460 residues long: Arginine decarboxylase (460 aa).

K226 carries the post-translational modification N6-(pyridoxal phosphate)lysine.

This sequence belongs to the Orn/Lys/Arg decarboxylase class-I family. Pyridoxal 5'-phosphate is required as a cofactor.

The protein localises to the cytoplasm. It catalyses the reaction L-arginine + H(+) = agmatine + CO2. It functions in the pathway amine and polyamine biosynthesis; agmatine biosynthesis; agmatine from L-arginine: step 1/1. Catalyzes the formation of agmatine from arginine. The chain is Arginine decarboxylase (speA) from Bacillus cereus (strain ATCC 14579 / DSM 31 / CCUG 7414 / JCM 2152 / NBRC 15305 / NCIMB 9373 / NCTC 2599 / NRRL B-3711).